The chain runs to 139 residues: Probable trafficking protein particle complex subunit 2 (139 aa).

The protein belongs to the TRAPP small subunits family. Sedlin subfamily. As to quaternary structure, part of the multisubunit TRAPP (transport protein particle) complex.

The protein localises to the cytoplasm. The protein resides in the perinuclear region. Its subcellular location is the endoplasmic reticulum. It localises to the golgi apparatus. Its function is as follows. May play a role in vesicular transport from endoplasmic reticulum to Golgi. Involved in dsRNA uptake. In Drosophila melanogaster (Fruit fly), this protein is Probable trafficking protein particle complex subunit 2.